The sequence spans 391 residues: NAD(P)H-quinone oxidoreductase subunit H, chloroplastic (391 aa).

Belongs to the complex I 49 kDa subunit family. As to quaternary structure, NDH is composed of at least 16 different subunits, 5 of which are encoded in the nucleus.

The protein localises to the plastid. The protein resides in the chloroplast thylakoid membrane. It carries out the reaction a plastoquinone + NADH + (n+1) H(+)(in) = a plastoquinol + NAD(+) + n H(+)(out). The enzyme catalyses a plastoquinone + NADPH + (n+1) H(+)(in) = a plastoquinol + NADP(+) + n H(+)(out). In terms of biological role, NDH shuttles electrons from NAD(P)H:plastoquinone, via FMN and iron-sulfur (Fe-S) centers, to quinones in the photosynthetic chain and possibly in a chloroplast respiratory chain. The immediate electron acceptor for the enzyme in this species is believed to be plastoquinone. Couples the redox reaction to proton translocation, and thus conserves the redox energy in a proton gradient. The protein is NAD(P)H-quinone oxidoreductase subunit H, chloroplastic of Nephroselmis olivacea (Green alga).